An 839-amino-acid chain; its full sequence is Probable alpha-glucuronidase A (839 aa).

An N-terminal signal peptide occupies residues 1–18 (MRWSFLTVLLWLVSLTGA). N-linked (GlcNAc...) asparagine glycans are attached at residues Asn49, Asn101, Asn148, Asn221, Asn278, Asn309, Asn342, Asn464, Asn526, Asn575, Asn681, and Asn731.

The protein belongs to the glycosyl hydrolase 67 family.

The protein resides in the secreted. It carries out the reaction an alpha-D-glucuronoside + H2O = D-glucuronate + an alcohol. In terms of biological role, alpha-glucuronidase involved in the hydrolysis of xylan, a major structural heterogeneous polysaccharide found in plant biomass representing the second most abundant polysaccharide in the biosphere, after cellulose. Releases 4-O-methylglucuronic acid from xylan. This Aspergillus flavus (strain ATCC 200026 / FGSC A1120 / IAM 13836 / NRRL 3357 / JCM 12722 / SRRC 167) protein is Probable alpha-glucuronidase A (aguA).